The following is a 165-amino-acid chain: Protein SprT (165 aa).

A SprT-like domain is found at 22-163 (LAQANLKLDR…RCVHCGEPLV (142 aa)). H78 is a binding site for Zn(2+). The active site involves E79. Zn(2+) is bound at residue H82.

The protein belongs to the SprT family. Zn(2+) serves as cofactor.

Its subcellular location is the cytoplasm. This is Protein SprT from Salmonella paratyphi C (strain RKS4594).